Consider the following 491-residue polypeptide: Ketol-acid reductoisomerase (NADP(+)) (491 aa).

A KARI N-terminal Rossmann domain is found at 15-208; sequence AQLGKCRFMG…GGHRAGVLES (194 aa). NADP(+)-binding positions include 45 to 48, Arg68, Arg76, Ser78, and 108 to 110; these read CGAQ and DKQ. His132 is a catalytic residue. Gly158 provides a ligand contact to NADP(+). 2 consecutive KARI C-terminal knotted domains span residues 209 to 344 and 345 to 484; these read SFVA…TAPQ and YEGK…MTDM. Mg(2+)-binding residues include Asp217, Glu221, Glu389, and Glu393. Ser414 is a binding site for substrate.

Belongs to the ketol-acid reductoisomerase family. Mg(2+) is required as a cofactor.

It catalyses the reaction (2R)-2,3-dihydroxy-3-methylbutanoate + NADP(+) = (2S)-2-acetolactate + NADPH + H(+). The enzyme catalyses (2R,3R)-2,3-dihydroxy-3-methylpentanoate + NADP(+) = (S)-2-ethyl-2-hydroxy-3-oxobutanoate + NADPH + H(+). It participates in amino-acid biosynthesis; L-isoleucine biosynthesis; L-isoleucine from 2-oxobutanoate: step 2/4. It functions in the pathway amino-acid biosynthesis; L-valine biosynthesis; L-valine from pyruvate: step 2/4. In terms of biological role, involved in the biosynthesis of branched-chain amino acids (BCAA). Catalyzes an alkyl-migration followed by a ketol-acid reduction of (S)-2-acetolactate (S2AL) to yield (R)-2,3-dihydroxy-isovalerate. In the isomerase reaction, S2AL is rearranged via a Mg-dependent methyl migration to produce 3-hydroxy-3-methyl-2-ketobutyrate (HMKB). In the reductase reaction, this 2-ketoacid undergoes a metal-dependent reduction by NADPH to yield (R)-2,3-dihydroxy-isovalerate. The chain is Ketol-acid reductoisomerase (NADP(+)) from Escherichia fergusonii (strain ATCC 35469 / DSM 13698 / CCUG 18766 / IAM 14443 / JCM 21226 / LMG 7866 / NBRC 102419 / NCTC 12128 / CDC 0568-73).